We begin with the raw amino-acid sequence, 317 residues long: MRSYLDFEKPVAELEAKLEELRALGARDGAVAISDDVSRLESKAAAALAELYATLTPWQKTQVARHPQRPHFVDYCAGLIEEFTPLAGDRSFGEDEAVVGGFGRFRGRPVCVIGQEKGATTEARIRHNFGMARPEGYRKAVRLMELAGRFGLPVLTFVDTAGAYPGIEAEERGQAEAIARSTEACLALGTPNVALVIGEGGSGGAIALATANRVLMLEHAIYSVISPEGAASILWRDAGRAQDAATAMKITAQDLLRLGVIDGIVPEPTGGAHREPEAAIRAAGDALAEALTGLADLDADALREQRAQKFLEIGRRL.

Residues 39–293 (RLESKAAAAL…GDALAEALTG (255 aa)) form the CoA carboxyltransferase C-terminal domain.

The protein belongs to the AccA family. Acetyl-CoA carboxylase is a heterohexamer composed of biotin carboxyl carrier protein (AccB), biotin carboxylase (AccC) and two subunits each of ACCase subunit alpha (AccA) and ACCase subunit beta (AccD).

It is found in the cytoplasm. It carries out the reaction N(6)-carboxybiotinyl-L-lysyl-[protein] + acetyl-CoA = N(6)-biotinyl-L-lysyl-[protein] + malonyl-CoA. The protein operates within lipid metabolism; malonyl-CoA biosynthesis; malonyl-CoA from acetyl-CoA: step 1/1. Functionally, component of the acetyl coenzyme A carboxylase (ACC) complex. First, biotin carboxylase catalyzes the carboxylation of biotin on its carrier protein (BCCP) and then the CO(2) group is transferred by the carboxyltransferase to acetyl-CoA to form malonyl-CoA. The polypeptide is Acetyl-coenzyme A carboxylase carboxyl transferase subunit alpha (Methylobacterium nodulans (strain LMG 21967 / CNCM I-2342 / ORS 2060)).